Consider the following 298-residue polypeptide: Acetylglutamate kinase (298 aa).

Substrate is bound by residues 69-70 (GG), Arg91, and Asn196.

The protein belongs to the acetylglutamate kinase family. ArgB subfamily.

The protein resides in the cytoplasm. It catalyses the reaction N-acetyl-L-glutamate + ATP = N-acetyl-L-glutamyl 5-phosphate + ADP. The protein operates within amino-acid biosynthesis; L-arginine biosynthesis; N(2)-acetyl-L-ornithine from L-glutamate: step 2/4. Its function is as follows. Catalyzes the ATP-dependent phosphorylation of N-acetyl-L-glutamate. The chain is Acetylglutamate kinase from Granulibacter bethesdensis (strain ATCC BAA-1260 / CGDNIH1).